Here is a 452-residue protein sequence, read N- to C-terminus: Bis(5'-adenosyl)-triphosphatase ENPP4 (452 aa).

The first 15 residues, 1–15, serve as a signal peptide directing secretion; that stretch reads MKLLVILLFSGLITG. Residues 16 to 406 lie on the Extracellular side of the membrane; that stretch reads FRSDSSSSLP…DQWCINLPEA (391 aa). Residues D34 and T70 each coordinate Zn(2+). The active-site AMP-threonine intermediate is T70. Residues N91 and Y154 each contribute to the substrate site. Residues N155 and N166 are each glycosylated (N-linked (GlcNAc...) asparagine). Zn(2+)-binding residues include D189, H193, D237, and H238. D189 is a substrate binding site. An intrachain disulfide couples C254 to C287. A glycan (N-linked (GlcNAc...) asparagine) is linked at N276. Residue H335 participates in Zn(2+) binding. C393 and C400 form a disulfide bridge. The chain crosses the membrane as a helical span at residues 407–427; the sequence is IAIVIGSLLVLTMLTCLIIIM. The Cytoplasmic segment spans residues 428–452; it reads QNRLSVPRPFSRLQLQEDDDDPLIG.

Belongs to the nucleotide pyrophosphatase/phosphodiesterase family. Zn(2+) serves as cofactor.

It is found in the cell membrane. It catalyses the reaction P(1),P(3)-bis(5'-adenosyl) triphosphate + H2O = AMP + ADP + 2 H(+). Functionally, hydrolyzes extracellular Ap3A into AMP and ADP, and Ap4A into AMP and ATP. Ap3A and Ap4A are diadenosine polyphosphates thought to induce proliferation of vascular smooth muscle cells. Acts as a procoagulant, mediating platelet aggregation at the site of nascent thrombus via release of ADP from Ap3A and activation of ADP receptors. This is Bis(5'-adenosyl)-triphosphatase ENPP4 (ENPP4) from Pongo abelii (Sumatran orangutan).